We begin with the raw amino-acid sequence, 272 residues long: Prohibitin 1 (272 aa).

Residues 177-211 (KEFTEAVEMKQVAQQEAERARFIVEKAEQQKKAAV) adopt a coiled-coil conformation.

In terms of assembly, the mitochondrial prohibitin complex consists of two subunits (PHB1 and PHB2), assembled into a membrane-associated ring-shaped supercomplex of approximately 1 mDa.

It localises to the mitochondrion inner membrane. Its subcellular location is the nucleus. The protein localises to the cytoplasm. It is found in the cell membrane. Functionally, protein with pleiotropic attributes mediated in a cell-compartment- and tissue-specific manner, which include the plasma membrane-associated cell signaling functions, mitochondrial chaperone, and transcriptional co-regulator of transcription factors in the nucleus. Its function is as follows. In the mitochondria, together with PHB2, forms large ring complexes (prohibitin complexes) in the inner mitochondrial membrane (IMM) and functions as a chaperone protein that stabilizes mitochondrial respiratory enzymes and maintains mitochondrial integrity in the IMM, which is required for mitochondrial morphogenesis, neuronal survival, and normal lifespan. In terms of biological role, in the nucleus, acts as a transcription coregulator, enhances promoter binding by TP53, a transcription factor it activates, but reduces the promoter binding by E2F1, a transcription factor it represses. In the plasma membrane, cooperates with CD86 to mediate CD86-signaling in B lymphocytes that regulates the level of IgG1 produced through the activation of distal signaling intermediates. Upon CD40 engagement, required to activate NF-kappa-B signaling pathway via phospholipase C and protein kinase C activation. This chain is Prohibitin 1 (PHB1), found in Gallus gallus (Chicken).